Consider the following 472-residue polypeptide: Ribosomal protein uS12 methylthiotransferase RimO (472 aa).

In terms of domain architecture, MTTase N-terminal spans 1 to 114 (MKFHIITLGC…IGDVVDTLQR (114 aa)). 6 residues coordinate [4Fe-4S] cluster: Cys-10, Cys-46, Cys-78, Cys-171, Cys-175, and Cys-178. Positions 157–388 (RITGPSAYLK…MRLQQGISRQ (232 aa)) constitute a Radical SAM core domain. Residues 391-460 (RRWVGRVIRV…DYDLWGEMVE (70 aa)) enclose the TRAM domain.

The protein belongs to the methylthiotransferase family. RimO subfamily. The cofactor is [4Fe-4S] cluster.

The protein localises to the cytoplasm. The catalysed reaction is L-aspartate(89)-[ribosomal protein uS12]-hydrogen + (sulfur carrier)-SH + AH2 + 2 S-adenosyl-L-methionine = 3-methylsulfanyl-L-aspartate(89)-[ribosomal protein uS12]-hydrogen + (sulfur carrier)-H + 5'-deoxyadenosine + L-methionine + A + S-adenosyl-L-homocysteine + 2 H(+). Catalyzes the methylthiolation of an aspartic acid residue of ribosomal protein uS12. This is Ribosomal protein uS12 methylthiotransferase RimO from Roseiflexus sp. (strain RS-1).